The following is a 344-amino-acid chain: Protein L-Myc-1-A (344 aa).

Disordered regions lie at residues 100 to 162 (RLTT…DDEI) and 209 to 261 (PPEP…EDIV). Polar residues-rich tracts occupy residues 102 to 112 (TTASPRATNPQ), 123 to 133 (PGVNSIEQNAN), and 236 to 255 (PALQ…SGSS). One can recognise a bHLH domain in the interval 261 to 313 (VKKKNHNYLERKRRNDLRSRFLALREEVPSLTRSTKTPKVVVLSKATEFLKGL). The tract at residues 313–341 (LVIQEQQLTAEKFKLWSRHQQLLRRISHL) is leucine-zipper.

Efficient DNA binding requires dimerization with another bHLH protein. Binds DNA as a heterodimer with MAX. In terms of tissue distribution, high levels in oocytes, modest levels in kidney and low levels in spleen.

Its subcellular location is the nucleus. The chain is Protein L-Myc-1-A (mycl1-a) from Xenopus laevis (African clawed frog).